The primary structure comprises 514 residues: tRNA-2-methylthio-N(6)-dimethylallyladenosine synthase (514 aa).

Residues 1-21 form a disordered region; the sequence is MNEEQRKASSVDVLAERDKKA. An MTTase N-terminal domain is found at 68 to 186; sequence RTFLIKTYGC…LPEILEEAYL (119 aa). [4Fe-4S] cluster-binding residues include cysteine 77, cysteine 113, cysteine 147, cysteine 223, cysteine 227, and cysteine 230. Residues 209-440 enclose the Radical SAM core domain; it reads REGNIKAWVN…KKVGHYSQIA (232 aa). Residues 442 to 505 enclose the TRAM domain; sequence SKYEGQTVTV…QYSLNGSFVK (64 aa).

The protein belongs to the methylthiotransferase family. MiaB subfamily. In terms of assembly, monomer. It depends on [4Fe-4S] cluster as a cofactor.

It is found in the cytoplasm. The catalysed reaction is N(6)-dimethylallyladenosine(37) in tRNA + (sulfur carrier)-SH + AH2 + 2 S-adenosyl-L-methionine = 2-methylsulfanyl-N(6)-dimethylallyladenosine(37) in tRNA + (sulfur carrier)-H + 5'-deoxyadenosine + L-methionine + A + S-adenosyl-L-homocysteine + 2 H(+). Functionally, catalyzes the methylthiolation of N6-(dimethylallyl)adenosine (i(6)A), leading to the formation of 2-methylthio-N6-(dimethylallyl)adenosine (ms(2)i(6)A) at position 37 in tRNAs that read codons beginning with uridine. In Staphylococcus aureus (strain MRSA252), this protein is tRNA-2-methylthio-N(6)-dimethylallyladenosine synthase.